A 95-amino-acid chain; its full sequence is Small ribosomal subunit protein uS19 (95 aa).

This sequence belongs to the universal ribosomal protein uS19 family.

Its function is as follows. Protein S19 forms a complex with S13 that binds strongly to the 16S ribosomal RNA. In Bdellovibrio bacteriovorus (strain ATCC 15356 / DSM 50701 / NCIMB 9529 / HD100), this protein is Small ribosomal subunit protein uS19.